The following is a 288-amino-acid chain: Protease HtpX homolog (288 aa).

The next 2 membrane-spanning stretches (helical) occupy residues 6–26 and 28–48; these read TAFL…YVGG and QGMM…YFFS. Zn(2+) is bound at residue H130. The active site involves E131. Residue H134 coordinates Zn(2+). 2 helical membrane passes run 140–160 and 179–199; these read ILTG…ANFA and VIML…QMAI. Zn(2+) is bound at residue E204.

The protein belongs to the peptidase M48B family. The cofactor is Zn(2+).

The protein localises to the cell inner membrane. The protein is Protease HtpX homolog of Campylobacter concisus (strain 13826).